A 479-amino-acid polypeptide reads, in one-letter code: Adenylate kinase 8 (479 aa).

2 adenylate kinase regions span residues 58–258 (PRVV…TYVQ) and 269–471 (PKVL…SGII). 67 to 72 (ASGKTT) provides a ligand contact to ATP. The segment at 87-113 (TKENLLEREFSLLSLEAKKHYQVYKRV) is NMP 1. Residues 140 to 143 (GIPE), glutamine 147, and arginine 203 each bind AMP. The tract at residues 177–206 (GKRIDPVTGEIYHTTFDWPPELEIQNRLIQ) is LID 1. Residue 278-283 (GCGKKL) coordinates ATP. An NMP 2 region spans residues 298-327 (SCGQLLKEAMAAESSLGDLIEPFFEKRMTV). AMP is bound by residues 325–327 (MTV), 354–357 (GFPR), and glutamine 361. Residues 391 to 424 (LRRTDPVTGERFHLMYKPPPTIEVQARLLQNPKD) are LID 2. Arginine 392 is a binding site for ATP.

Belongs to the adenylate kinase family. As to quaternary structure, interacts with CFAP45 and CFAP52; CFAP45 and AK8 dimerization may create a cavity at the interface of the dimer that can accommodate AMP.

It is found in the cytoplasm. The protein localises to the cytosol. Its subcellular location is the cytoskeleton. It localises to the cilium axoneme. The enzyme catalyses AMP + ATP = 2 ADP. It catalyses the reaction a 2'-deoxyribonucleoside 5'-diphosphate + ATP = a 2'-deoxyribonucleoside 5'-triphosphate + ADP. The catalysed reaction is a ribonucleoside 5'-diphosphate + ATP = a ribonucleoside 5'-triphosphate + ADP. Functionally, nucleoside monophosphate (NMP) kinase that catalyzes the reversible transfer of the terminal phosphate group between nucleoside triphosphates and monophosphates. Has highest activity toward AMP, and weaker activity toward dAMP, CMP and dCMP. Also displays broad nucleoside diphosphate kinase activity. This is Adenylate kinase 8 (Ak8) from Rattus norvegicus (Rat).